The sequence spans 157 residues: uncharacterized protein (157 aa).

The N-terminal stretch at 1-28 is a signal peptide; that stretch reads MKRLFMKASLVLFAVVFVFAVKGAPAKA.

This is an uncharacterized protein from Bacillus subtilis (strain 168).